A 271-amino-acid chain; its full sequence is GPN-loop GTPase 3 (271 aa).

13-18 is a binding site for GTP; the sequence is GVGKST. A Gly-Pro-Asn (GPN)-loop; involved in dimer interface motif is present at residues 70–72; sequence GPN. 173–176 is a binding site for GTP; the sequence is SKMD.

Belongs to the GPN-loop GTPase family. As to quaternary structure, heterodimers with GPN1 or GPN2. Binds to RNA polymerase II (RNAPII).

In terms of biological role, small GTPase required for proper nuclear import of RNA polymerase II and III (RNAPII and RNAPIII). May act at an RNAP assembly step prior to nuclear import. The polypeptide is GPN-loop GTPase 3 (Yarrowia lipolytica (strain CLIB 122 / E 150) (Yeast)).